A 223-amino-acid polypeptide reads, in one-letter code: Deoxyribose-phosphate aldolase (223 aa).

D89 (proton donor/acceptor) is an active-site residue. K152 functions as the Schiff-base intermediate with acetaldehyde in the catalytic mechanism. The active-site Proton donor/acceptor is K181.

This sequence belongs to the DeoC/FbaB aldolase family. DeoC type 1 subfamily.

The protein resides in the cytoplasm. It carries out the reaction 2-deoxy-D-ribose 5-phosphate = D-glyceraldehyde 3-phosphate + acetaldehyde. It participates in carbohydrate degradation; 2-deoxy-D-ribose 1-phosphate degradation; D-glyceraldehyde 3-phosphate and acetaldehyde from 2-deoxy-alpha-D-ribose 1-phosphate: step 2/2. Functionally, catalyzes a reversible aldol reaction between acetaldehyde and D-glyceraldehyde 3-phosphate to generate 2-deoxy-D-ribose 5-phosphate. This is Deoxyribose-phosphate aldolase from Bacillus subtilis (strain 168).